The following is a 254-amino-acid chain: ATP-dependent L-serine kinase SbnI (254 aa).

The active site involves E20. Position 33 (S33) interacts with ADP. I57 provides a ligand contact to O-phospho-L-serine. ADP is bound by residues D58, G59, H61, and R62. Positions 59 and 61 each coordinate O-phospho-L-serine. Residues W98 and R229 each contribute to the O-phospho-L-serine site.

In terms of assembly, forms dimers and tetramers in solution. Predominantly forms dimers. Dimerization/oligomerization is not essential for kinase activity.

The catalysed reaction is L-serine + ATP = O-phospho-L-serine + ADP + H(+). The protein operates within siderophore biosynthesis. Binds heme and heme binding inhibits DNA binding. In terms of biological role, free serine kinase that uses ATP to phosphorylate L-serine to yield O-phospho-L-serine and ADP. O-phospho-L-serine serves as a substrate for SbnA and is a precursor for staphyloferrin B biosynthesis. Is also a DNA-binding regulatory protein that senses heme to control gene expression for siderophore biosynthesis. Binds to DNA within the sbnC coding region and is required for expression of genes in the sbn operon from sbnD onward. The sequence is that of ATP-dependent L-serine kinase SbnI from Staphylococcus aureus (strain NCTC 8325 / PS 47).